The following is a 209-amino-acid chain: Uracil phosphoribosyltransferase (209 aa).

Residues arginine 79, arginine 104, and 131-139 each bind 5-phospho-alpha-D-ribose 1-diphosphate; that span reads DPMLATGGS. Uracil contacts are provided by residues isoleucine 194 and 199-201; that span reads GDA. A 5-phospho-alpha-D-ribose 1-diphosphate-binding site is contributed by aspartate 200.

This sequence belongs to the UPRTase family. It depends on Mg(2+) as a cofactor.

The catalysed reaction is UMP + diphosphate = 5-phospho-alpha-D-ribose 1-diphosphate + uracil. It participates in pyrimidine metabolism; UMP biosynthesis via salvage pathway; UMP from uracil: step 1/1. Its activity is regulated as follows. Allosterically activated by GTP. Its function is as follows. Catalyzes the conversion of uracil and 5-phospho-alpha-D-ribose 1-diphosphate (PRPP) to UMP and diphosphate. The polypeptide is Uracil phosphoribosyltransferase (Streptococcus pneumoniae serotype 4 (strain ATCC BAA-334 / TIGR4)).